The primary structure comprises 366 residues: MSQSVLRLVDKDTMDKQKALEAAVGQIERAFGKGSIMKLGQRGSVVDIESISTGSLGLDIALGIGGLPRGRIVEIYGPESSGKTTLALHVVAEAQKKGGQCAFVDAEHAFDPLYARKLGVSLDDLLVSQPDTGEQALEIADTLVRSGAIDVLVIDSVAALVPKAELEGDMGDSHVGLQARLMSQALRKLTGTVSRSNTLIIFINQIRMKIGVMFGNPETTTGGNALKFYASVRLDIRRIGAVKDKEEVVGNQTRVKVVKNKVAPPFKVVEFDIMYGEGISKLGEMLDLGVKANIIEKSGAWFSYNSTRIGQGRENAKQFLRDNPAMAEEIENAVRANAGLIAEEMIGGPGGEDDDAGGAAGVGDEA.

77 to 84 contributes to the ATP binding site; sequence GPESSGKT. The segment at 346-366 is disordered; sequence IGGPGGEDDDAGGAAGVGDEA.

The protein belongs to the RecA family.

It localises to the cytoplasm. Functionally, can catalyze the hydrolysis of ATP in the presence of single-stranded DNA, the ATP-dependent uptake of single-stranded DNA by duplex DNA, and the ATP-dependent hybridization of homologous single-stranded DNAs. It interacts with LexA causing its activation and leading to its autocatalytic cleavage. This Rhodospirillum rubrum (strain ATCC 11170 / ATH 1.1.1 / DSM 467 / LMG 4362 / NCIMB 8255 / S1) protein is Protein RecA.